A 442-amino-acid polypeptide reads, in one-letter code: Proline--tRNA ligase (442 aa).

Belongs to the class-II aminoacyl-tRNA synthetase family. ProS type 2 subfamily. In terms of assembly, homodimer.

It is found in the cytoplasm. The catalysed reaction is tRNA(Pro) + L-proline + ATP = L-prolyl-tRNA(Pro) + AMP + diphosphate. Functionally, catalyzes the attachment of proline to tRNA(Pro) in a two-step reaction: proline is first activated by ATP to form Pro-AMP and then transferred to the acceptor end of tRNA(Pro). In Brucella canis (strain ATCC 23365 / NCTC 10854 / RM-666), this protein is Proline--tRNA ligase.